The sequence spans 284 residues: Diaminopimelate epimerase (284 aa).

Asparagine 20, glutamine 53, and asparagine 73 together coordinate substrate. Cysteine 82 acts as the Proton donor in catalysis. Residues glycine 83–asparagine 84, asparagine 167, asparagine 200, and glutamate 218–arginine 219 contribute to the substrate site. Catalysis depends on cysteine 227, which acts as the Proton acceptor. Residue glycine 228–serine 229 participates in substrate binding.

This sequence belongs to the diaminopimelate epimerase family. Homodimer.

Its subcellular location is the cytoplasm. It carries out the reaction (2S,6S)-2,6-diaminopimelate = meso-2,6-diaminopimelate. It functions in the pathway amino-acid biosynthesis; L-lysine biosynthesis via DAP pathway; DL-2,6-diaminopimelate from LL-2,6-diaminopimelate: step 1/1. Functionally, catalyzes the stereoinversion of LL-2,6-diaminopimelate (L,L-DAP) to meso-diaminopimelate (meso-DAP), a precursor of L-lysine and an essential component of the bacterial peptidoglycan. The polypeptide is Diaminopimelate epimerase (Xylella fastidiosa (strain M23)).